The following is an 814-amino-acid chain: Rho GTPase-activating protein 26 (814 aa).

The region spanning Glu7–Thr262 is the BAR domain. In terms of domain architecture, PH spans Pro265 to Pro369. The region spanning Ala383–Phe568 is the Rho-GAP domain. The span at Leu624–Ser648 shows a compositional bias: low complexity. Residues Leu624 to Ser696 form a disordered region. The segment covering Ser662 to Pro672 has biased composition (pro residues). Ser668 is subject to Phosphoserine. Thr670 is modified (phosphothreonine). A Phosphoserine modification is found at Ser671. Over residues Leu673–Ser696 the composition is skewed to low complexity. One can recognise an SH3 domain in the interval Thr756–Leu814.

Interacts with NYAP1, NYAP2 and MYO16. Interacts with MICAL1 and WDR44. Binds to the C-terminus of PTK2/FAK1. In terms of assembly, (Microbial infection) Interacts with human parainfluenza virus type 2 proteins P and V. Post-translationally, phosphorylated in a PINK1-dependent fashion promoting retrograde mitochondrial trafficking and clustering.

It is found in the endosome membrane. It localises to the cytoplasm. Its subcellular location is the cell junction. The protein localises to the focal adhesion. The protein resides in the cytoskeleton. GTPase-activating protein for RHOA and CDC42. Facilitates mitochondrial quality control by promoting Parkin-mediated recruitment of autophagosomes to damaged mitochondria. Negatively regulates the growth of human parainfluenza virus type 2 by inhibiting hPIV-2-mediated RHOA activation via interaction with two of its viral proteins P and V. In terms of biological role, associates with MICAL1 on the endosomal membrane to promote Rab8-Rab10-dependent tubule extension. After dissociation of MICAL1, recruits WDR44 which connects the endoplasmic reticulum (ER) with the endosomal tubule, thereby participating in the export of a subset of neosynthesized proteins. This Homo sapiens (Human) protein is Rho GTPase-activating protein 26 (ARHGAP26).